We begin with the raw amino-acid sequence, 148 residues long: Protoporphyrinogen IX oxidase (148 aa).

4 consecutive transmembrane segments (helical) span residues 7 to 27, 59 to 79, 86 to 106, and 128 to 148; these read YFLW…AALF, FIAS…LLIA, GGWL…HFYC, and FNEI…VKPF. His15 contacts heme. Lys92 lines the heme pocket.

This sequence belongs to the HemJ family. As to quaternary structure, homodimer. Heme b serves as cofactor.

Its subcellular location is the cell membrane. It catalyses the reaction protoporphyrinogen IX + 3 A = protoporphyrin IX + 3 AH2. It participates in porphyrin-containing compound metabolism; protoporphyrin-IX biosynthesis; protoporphyrin-IX from protoporphyrinogen-IX: step 1/1. Its function is as follows. Catalyzes the oxidation of protoporphyrinogen IX to protoporphyrin IX. Is involved in the biosynthesis of tetrapyrrole molecules like heme. Does not use oxygen or artificial electron acceptors such as menadione or benzoquinone. This chain is Protoporphyrinogen IX oxidase, found in Helicobacter pylori (strain J99 / ATCC 700824) (Campylobacter pylori J99).